The sequence spans 298 residues: Ribosomal protein L11 methyltransferase (298 aa).

Residues Thr139, Gly163, Asp185, and Asn232 each contribute to the S-adenosyl-L-methionine site.

It belongs to the methyltransferase superfamily. PrmA family.

It localises to the cytoplasm. The catalysed reaction is L-lysyl-[protein] + 3 S-adenosyl-L-methionine = N(6),N(6),N(6)-trimethyl-L-lysyl-[protein] + 3 S-adenosyl-L-homocysteine + 3 H(+). Functionally, methylates ribosomal protein L11. In Microcystis aeruginosa (strain NIES-843 / IAM M-2473), this protein is Ribosomal protein L11 methyltransferase.